Here is a 715-residue protein sequence, read N- to C-terminus: MNSSSSHRNILVTSALPYANGPIHLGHVLEGIQTDIWVRFQKAIGNECYFFCADDTHGTPVMLAARKEGITPEQLIERVGQEHYRDLTSFGIEYDHYDSTHSKANQEISKDIYLKLKSKGHISRRSIEQSYCETDKMFLPDRFIKGTCPNCKSKDQYGDNCEVCGATYSPKDLIDSHCSLCGTSPVVKNSDHIFFKLGDFHKKDEKSTSLETINPSHLKTDFDLQSWIETSGVVSESEGVKKKLKEWFDAGLQDWDISRDGPYFGFEIPDETNKYFYVWLDAPIGYMASSKNFFEKNFPNEPNKFDSFWKNKNSEIVHFIGKDILYFHTLFWPAMLEGSDYRAPSKVHVHGFIGVNGEKMSKSRGTFIKAETFVKYLDPEHLRFYLASKLGPGMDDIDLSFEDFINKVNSDLVGNLINSVSRVSTTILDALDRTLGVVSKEGLALIEEILYQTVKFGPGEDSIQNIIKYAYDQRNYAKVLREITRLGDRVNRYVNDNAPWKLIKENPEKAREVVTVTLNASRFLAIYLYPVVPKISEQIYKLLNLQDSPSFKDLDKNRILENIKVLPYEMISKRVDEKAIKAMLEENKQSEHSKKVETSENPVPEERLEISIDDLSKVELRVGQIVEAGPVDGADKLVNVKVDLGELGIKNVFAGIKVAYQPENLKGLKVVVVANLKPRKMKFGISEAMLLASGEGESLSLFIPHKDAKPGDRLK.

Positions 17 to 27 (PYANGPIHLGH) match the 'HIGH' region motif. 4 residues coordinate Zn(2+): Cys-148, Cys-151, Cys-161, and Cys-164. Positions 359–363 (KMSKS) match the 'KMSKS' region motif. Residue Lys-362 participates in ATP binding. Residues 614–715 (DLSKVELRVG…KDAKPGDRLK (102 aa)) form the tRNA-binding domain.

The protein belongs to the class-I aminoacyl-tRNA synthetase family. MetG type 1 subfamily. In terms of assembly, homodimer. Requires Zn(2+) as cofactor.

It localises to the cytoplasm. It carries out the reaction tRNA(Met) + L-methionine + ATP = L-methionyl-tRNA(Met) + AMP + diphosphate. Functionally, is required not only for elongation of protein synthesis but also for the initiation of all mRNA translation through initiator tRNA(fMet) aminoacylation. This is Methionine--tRNA ligase from Leptospira interrogans serogroup Icterohaemorrhagiae serovar Lai (strain 56601).